A 278-amino-acid polypeptide reads, in one-letter code: MSWHGHLQLHYRHDPNEDRTVAHDRHHGPLRVLQRLYPEGPSICHHVLVHPPGGIVGGDTLEVDLDLAPGSHALITTPGATRYYRSAGEVARQQVRARLAEGSRLEWLPLETIAYDACIAENSLRFEIAPGAMMMGWDLLALGLPAAGKPWQRGSYLQQLELPGIWLERARIDAADARLLDSPLGWAGQRVLGTFWLAGGDALPKGLSDALIESARALIGDSALAATAGVSAPHANTVVLRVLAPRVEPAMHLLGAIRAAWRSIAWHLDPCVPRIWRT.

The protein belongs to the UreD family. UreD, UreF and UreG form a complex that acts as a GTP-hydrolysis-dependent molecular chaperone, activating the urease apoprotein by helping to assemble the nickel containing metallocenter of UreC. The UreE protein probably delivers the nickel.

It localises to the cytoplasm. Functionally, required for maturation of urease via the functional incorporation of the urease nickel metallocenter. This Leptothrix cholodnii (strain ATCC 51168 / LMG 8142 / SP-6) (Leptothrix discophora (strain SP-6)) protein is Urease accessory protein UreD.